The primary structure comprises 458 residues: Phosphoglucosamine mutase (458 aa).

The active-site Phosphoserine intermediate is the Ser106. Ser106, Asp247, Asp249, and Asp251 together coordinate Mg(2+). Ser106 is modified (phosphoserine).

This sequence belongs to the phosphohexose mutase family. It depends on Mg(2+) as a cofactor. Activated by phosphorylation.

It carries out the reaction alpha-D-glucosamine 1-phosphate = D-glucosamine 6-phosphate. Catalyzes the conversion of glucosamine-6-phosphate to glucosamine-1-phosphate. This Chlamydia caviae (strain ATCC VR-813 / DSM 19441 / 03DC25 / GPIC) (Chlamydophila caviae) protein is Phosphoglucosamine mutase.